Here is a 405-residue protein sequence, read N- to C-terminus: Venom serine protease 34 (405 aa).

The N-terminal stretch at 1-35 (MIFTNNIAAFQNVVLVKKVKIVLLIFYGSIMFSMT) is a signal peptide. Cystine bridges form between Cys-42–Cys-70 and Cys-95–Cys-111. Residues 42–147 (CDYYQNLNLG…EVRPIKRVKD (106 aa)) form the CUB domain. An N-linked (GlcNAc...) asparagine glycan is attached at Asn-113. The Peptidase S1 domain occupies 161 to 397 (IVGGTNTGIN…YIDWIVSQTP (237 aa)). An intrachain disulfide couples Cys-188 to Cys-204. His-203 functions as the Charge relay system in the catalytic mechanism. Asn-209 and Asn-229 each carry an N-linked (GlcNAc...) asparagine glycan. Asp-257 acts as the Charge relay system in catalysis. Cystine bridges form between Cys-323/Cys-336 and Cys-345/Cys-375. Ser-349 functions as the Charge relay system in the catalytic mechanism.

This sequence belongs to the peptidase S1 family. Expressed by the venom duct.

The protein localises to the secreted. This is Venom serine protease 34 from Apis mellifera (Honeybee).